The following is a 602-amino-acid chain: DNA ligase (602 aa).

Glutamate 262 contributes to the ATP binding site. Residue lysine 264 is the N6-AMP-lysine intermediate of the active site. Positions 269, 284, 314, 354, 431, and 437 each coordinate ATP.

The protein belongs to the ATP-dependent DNA ligase family. In terms of assembly, monomer. Mg(2+) is required as a cofactor. The cofactor is Mn(2+).

It catalyses the reaction ATP + (deoxyribonucleotide)n-3'-hydroxyl + 5'-phospho-(deoxyribonucleotide)m = (deoxyribonucleotide)n+m + AMP + diphosphate.. The enzyme catalyses ADP + (deoxyribonucleotide)n-3'-hydroxyl + 5'-phospho-(deoxyribonucleotide)m = (deoxyribonucleotide)n+m + AMP + phosphate.. It carries out the reaction GTP + (deoxyribonucleotide)n-3'-hydroxyl + 5'-phospho-(deoxyribonucleotide)m = (deoxyribonucleotide)n+m + GMP + diphosphate.. Its activity is regulated as follows. Inhibited in the presence of 100 mM KCl, NaCl or NH(4)Cl. Its function is as follows. DNA ligase that seals nicks in double-stranded DNA during DNA replication, DNA recombination and DNA repair. Can also use ADP, but not NAD(+). In Aeropyrum pernix (strain ATCC 700893 / DSM 11879 / JCM 9820 / NBRC 100138 / K1), this protein is DNA ligase.